A 477-amino-acid polypeptide reads, in one-letter code: MTDRAQAVGSGPELGLRLYDTMAGAVRDFVPLRPGHASIYLCGATVQGLPHIGHVRSGVAFDVLRRWLTANGYDVAFIRNVTDIDDKILNKAADAGRPWWEWAATFERAFSAAYDALGVLPPSAEPRATGHITQMVELIERLIDKGHAYAAGGDVYFDVLSLPDYGQLSGHRIDDVHQGEGVATGKRDQRDFTLWKGAKPGEPSWPTPWGRGRPGWHTECVAMCEAYLGPEFDIHAGGMDLVFPHHENEIAQAHGAGDGFARYWLHNGWVTMGGEKMSKSLGNVLSIPAVLQRVRAAELRYYLGSAHYRSMLEFSETALQDAVKAYTGIEDFLHRVCSRVGSVPIGEWTPKFAAALNDDLSVPIALAEIHAARAEGNRALDSGDHQTAMQQASSIRAMMDILGCDPLNERWESRDATSAALKAVDVLVQWALASRAEARERRDWAAADAIRDRLKEAGIEVTDTADGPQWALIERDK.

Position 42 (cysteine 42) interacts with Zn(2+). A 'HIGH' region motif is present at residues 44 to 54; it reads ATVQGLPHIGH. Residues cysteine 220, histidine 245, and glutamate 249 each contribute to the Zn(2+) site. The 'KMSKS' region motif lies at 276–280; it reads KMSKS. Position 279 (lysine 279) interacts with ATP.

Belongs to the class-I aminoacyl-tRNA synthetase family. Monomer. Zn(2+) serves as cofactor.

It localises to the cytoplasm. The catalysed reaction is tRNA(Cys) + L-cysteine + ATP = L-cysteinyl-tRNA(Cys) + AMP + diphosphate. The polypeptide is Cysteine--tRNA ligase (Mycolicibacterium smegmatis (strain ATCC 700084 / mc(2)155) (Mycobacterium smegmatis)).